A 678-amino-acid polypeptide reads, in one-letter code: Serine/threonine-protein kinase mph1 (678 aa).

2 disordered regions span residues 39 to 93 and 114 to 209; these read KNDT…NSAL and LPST…SNSV. Polar residues-rich tracts occupy residues 41–66 and 114–125; these read DTFS…SSGA and LPSTNASHSEVS. One can recognise a Protein kinase domain in the interval 316 to 607; the sequence is FIKLGVVGKG…LVHPFLNPLP (292 aa). ATP contacts are provided by residues 322-330 and Lys345; that span reads VGKGGSSMV. Catalysis depends on Asp442, which acts as the Proton acceptor.

Belongs to the protein kinase superfamily. Ser/Thr protein kinase family.

The enzyme catalyses L-seryl-[protein] + ATP = O-phospho-L-seryl-[protein] + ADP + H(+). It carries out the reaction L-threonyl-[protein] + ATP = O-phospho-L-threonyl-[protein] + ADP + H(+). The catalysed reaction is L-tyrosyl-[protein] + ATP = O-phospho-L-tyrosyl-[protein] + ADP + H(+). Functionally, involved in mitotic spindle assembly checkpoint signaling, a process that delays anaphase until chromosomes are bioriented on the spindle, and in the repair of incorrect mitotic kinetochore-spindle microtubule attachments. Phosphorylates spc7/knl1 on MELT motifs; phosphorylation is required for recruitment of the BUB1-BUB3 complex to kinetochores. This Schizosaccharomyces pombe (strain 972 / ATCC 24843) (Fission yeast) protein is Serine/threonine-protein kinase mph1.